The primary structure comprises 502 residues: ATP synthase subunit alpha (502 aa).

A disordered region spans residues 115 to 135 (VDGLGPINTTNTRPIESPAPG). Residue 169–176 (GDRQTGKT) participates in ATP binding.

This sequence belongs to the ATPase alpha/beta chains family. As to quaternary structure, F-type ATPases have 2 components, CF(1) - the catalytic core - and CF(0) - the membrane proton channel. CF(1) has five subunits: alpha(3), beta(3), gamma(1), delta(1), epsilon(1). CF(0) has three main subunits: a(1), b(2) and c(9-12). The alpha and beta chains form an alternating ring which encloses part of the gamma chain. CF(1) is attached to CF(0) by a central stalk formed by the gamma and epsilon chains, while a peripheral stalk is formed by the delta and b chains.

The protein localises to the cell membrane. The enzyme catalyses ATP + H2O + 4 H(+)(in) = ADP + phosphate + 5 H(+)(out). Produces ATP from ADP in the presence of a proton gradient across the membrane. The alpha chain is a regulatory subunit. This is ATP synthase subunit alpha from Bacillus mycoides (strain KBAB4) (Bacillus weihenstephanensis).